Reading from the N-terminus, the 118-residue chain is Group 1 truncated hemoglobin GlbN (118 aa).

Position 70 (histidine 70) interacts with heme.

The protein belongs to the truncated hemoglobin family. Group I subfamily. In terms of assembly, monomer. Heme serves as cofactor.

Its subcellular location is the membrane. The protein is Group 1 truncated hemoglobin GlbN (glbN) of Nostoc sp. (strain MUN 8820).